We begin with the raw amino-acid sequence, 407 residues long: Argininosuccinate synthase (407 aa).

Residues 12–20 (AFSGGLDTS) and Ala39 each bind ATP. Residues Tyr90 and Ser95 each coordinate L-citrulline. Gly120 is a binding site for ATP. L-aspartate is bound by residues Thr122, Asn126, and Asp127. An L-citrulline-binding site is contributed by Asn126. Arg130, Ser181, Ser190, Glu266, and Tyr278 together coordinate L-citrulline.

This sequence belongs to the argininosuccinate synthase family. Type 1 subfamily. In terms of assembly, homotetramer.

It is found in the cytoplasm. The catalysed reaction is L-citrulline + L-aspartate + ATP = 2-(N(omega)-L-arginino)succinate + AMP + diphosphate + H(+). Its pathway is amino-acid biosynthesis; L-arginine biosynthesis; L-arginine from L-ornithine and carbamoyl phosphate: step 2/3. This chain is Argininosuccinate synthase, found in Nitrosospira multiformis (strain ATCC 25196 / NCIMB 11849 / C 71).